Reading from the N-terminus, the 447-residue chain is uncharacterized protein (447 aa).

The interval 39–76 (PQAAPYTRNNGMGECRRGHRQGHRAEVHDNRPADKVGQ) is disordered. A compositionally biased stretch (basic and acidic residues) spans 61–72 (HRAEVHDNRPAD).

It belongs to the 3-oxoacid CoA-transferase subunit A family.

This is an uncharacterized protein from Archaeoglobus fulgidus (strain ATCC 49558 / DSM 4304 / JCM 9628 / NBRC 100126 / VC-16).